Consider the following 275-residue polypeptide: NH(3)-dependent NAD(+) synthetase (275 aa).

Residue 46–53 coordinates ATP; sequence GISGGQDS. Residue D52 participates in Mg(2+) binding. Position 140 (R140) interacts with deamido-NAD(+). T160 lines the ATP pocket. Mg(2+) is bound at residue E165. Deamido-NAD(+) is bound by residues K173 and D180. Positions 189 and 211 each coordinate ATP. Position 260-261 (260-261) interacts with deamido-NAD(+); sequence HK.

This sequence belongs to the NAD synthetase family. In terms of assembly, homodimer.

It carries out the reaction deamido-NAD(+) + NH4(+) + ATP = AMP + diphosphate + NAD(+) + H(+). Its pathway is cofactor biosynthesis; NAD(+) biosynthesis; NAD(+) from deamido-NAD(+) (ammonia route): step 1/1. In terms of biological role, catalyzes the ATP-dependent amidation of deamido-NAD to form NAD. Uses ammonia as a nitrogen source. The sequence is that of NH(3)-dependent NAD(+) synthetase from Salmonella paratyphi A (strain ATCC 9150 / SARB42).